A 146-amino-acid chain; its full sequence is Large ribosomal subunit protein uL15 (146 aa).

The interval 1 to 51 is disordered; it reads MKLHELQPAAGSRKVRNRVGRGTSSGNGKTSGRGQKGQKARSGGGVRLGFE. Composition is skewed to gly residues over residues 23-35 and 42-51; these read TSSGNGKTSGRGQ and SGGGVRLGFE.

The protein belongs to the universal ribosomal protein uL15 family. In terms of assembly, part of the 50S ribosomal subunit.

Binds to the 23S rRNA. The protein is Large ribosomal subunit protein uL15 of Streptococcus sanguinis (strain SK36).